Reading from the N-terminus, the 602-residue chain is Beta-(1--&gt;2)glucan export ATP-binding/permease protein NdvA (602 aa).

The 286-residue stretch at Gly-21 to Met-306 folds into the ABC transmembrane type-1 domain. A run of 6 helical transmembrane segments spans residues Trp-22–Phe-42, Phe-63–Leu-83, Glu-141–Trp-161, Leu-163–Arg-183, Val-240–Ile-262, and Ile-280–Phe-300. Residues Val-340 to Ala-573 enclose the ABC transporter domain. Gly-373 to Ser-380 contributes to the ATP binding site.

It belongs to the ABC transporter superfamily. Beta-(1--&gt;2)glucan exporter (TC 3.A.1.108.1) family. As to quaternary structure, homodimer.

Its subcellular location is the cell inner membrane. It carries out the reaction [(1-&gt;2)-beta-D-glucosyl](n)(in) + ATP + H2O = [(1-&gt;2)-beta-D-glucosyl](n)(out) + ADP + phosphate + H(+). Its function is as follows. Involved in beta-(1--&gt;2)glucan export. Transmembrane domains (TMD) form a pore in the inner membrane and the ATP-binding domain (NBD) is responsible for energy generation. In Bradyrhizobium diazoefficiens (strain JCM 10833 / BCRC 13528 / IAM 13628 / NBRC 14792 / USDA 110), this protein is Beta-(1--&gt;2)glucan export ATP-binding/permease protein NdvA.